Consider the following 360-residue polypeptide: Peptide chain release factor 1 (360 aa).

Gln235 is subject to N5-methylglutamine.

The protein belongs to the prokaryotic/mitochondrial release factor family. Methylated by PrmC. Methylation increases the termination efficiency of RF1.

Its subcellular location is the cytoplasm. Functionally, peptide chain release factor 1 directs the termination of translation in response to the peptide chain termination codons UAG and UAA. This Bordetella parapertussis (strain 12822 / ATCC BAA-587 / NCTC 13253) protein is Peptide chain release factor 1.